Reading from the N-terminus, the 274-residue chain is 2,3,4,5-tetrahydropyridine-2,6-dicarboxylate N-succinyltransferase (274 aa).

The substrate site is built by Arg104 and Asp141.

Belongs to the transferase hexapeptide repeat family. As to quaternary structure, homotrimer.

It localises to the cytoplasm. It catalyses the reaction (S)-2,3,4,5-tetrahydrodipicolinate + succinyl-CoA + H2O = (S)-2-succinylamino-6-oxoheptanedioate + CoA. It functions in the pathway amino-acid biosynthesis; L-lysine biosynthesis via DAP pathway; LL-2,6-diaminopimelate from (S)-tetrahydrodipicolinate (succinylase route): step 1/3. The chain is 2,3,4,5-tetrahydropyridine-2,6-dicarboxylate N-succinyltransferase from Idiomarina loihiensis (strain ATCC BAA-735 / DSM 15497 / L2-TR).